Reading from the N-terminus, the 449-residue chain is MNPNQKIIAIGSICMVIGIVSLMLQIGNMISIWISHSIQTGNQRQAEPISNTKVLNEKAVASVTLAGNSSLCPISGWAVHSKDNSIRIGSKGDVFVIREPFISCSHLECRTFFLTQGALLNDKHSNGTVKDRSPHRTLMSCPVGEAPSPYNSRFESVAWSASACHDGTSWLTIGISGPDNGAVAVLKYNGIITDTIKSWRNNILRTQESECACVNGSCFTVMTDGPSNGQASYKIFKMEKGKVVKSVELDAPNYHYEECSCYPDAGEITCVCRDNWHGSNRPWVSFNQNLEYQIGYICSGVFGDNPRPNDGTGSCGPVSPNGAYGVKGFSFKYGNGVWIGRTKSTNSRSGFEMIWDPNGWTGTDSSFSVKQDIVAITDWSGYSGSFVQHPELTGLDCIRPCFWVELIRGRPKESTIWTSGSSISFCGVDSDTVGWSWPDGAELPFTIDK.

Topologically, residues 1–6 (MNPNQK) are intravirion. A helical transmembrane segment spans residues 7–27 (IIAIGSICMVIGIVSLMLQIG). The involved in apical transport and lipid raft association stretch occupies residues 11-33 (GSICMVIGIVSLMLQIGNMISIW). The Virion surface portion of the chain corresponds to 28-449 (NMISIWISHS…GAELPFTIDK (422 aa)). Residues 36–70 (HSIQTGNQRQAEPISNTKVLNEKAVASVTLAGNSS) form a hypervariable stalk region region. An N-linked (GlcNAc...) asparagine; by host glycan is attached at asparagine 68. The segment at 71–449 (LCPISGWAVH…GAELPFTIDK (379 aa)) is head of neuraminidase. Cystine bridges form between cysteine 72–cysteine 397, cysteine 104–cysteine 109, cysteine 164–cysteine 211, cysteine 213–cysteine 218, cysteine 259–cysteine 272, cysteine 261–cysteine 270, cysteine 298–cysteine 315, and cysteine 401–cysteine 426. Arginine 98 lines the substrate pocket. The N-linked (GlcNAc...) asparagine; by host glycan is linked to asparagine 126. The active-site Proton donor/acceptor is aspartate 131. Residue arginine 132 participates in substrate binding. N-linked (GlcNAc...) asparagine; by host glycosylation occurs at asparagine 215. 257–258 (EE) serves as a coordination point for substrate. Position 273 (arginine 273) interacts with substrate. Ca(2+)-binding residues include aspartate 274, glycine 278, and aspartate 304. Arginine 348 contacts substrate. Catalysis depends on tyrosine 382, which acts as the Nucleophile.

This sequence belongs to the glycosyl hydrolase 34 family. As to quaternary structure, homotetramer. The cofactor is Ca(2+). N-glycosylated.

The protein resides in the virion membrane. The protein localises to the host apical cell membrane. The enzyme catalyses Hydrolysis of alpha-(2-&gt;3)-, alpha-(2-&gt;6)-, alpha-(2-&gt;8)- glycosidic linkages of terminal sialic acid residues in oligosaccharides, glycoproteins, glycolipids, colominic acid and synthetic substrates.. With respect to regulation, inhibited by the neuraminidase inhibitors zanamivir (Relenza) and oseltamivir (Tamiflu). These drugs interfere with the release of progeny virus from infected cells and are effective against all influenza strains. Resistance to neuraminidase inhibitors is quite rare. Functionally, catalyzes the removal of terminal sialic acid residues from viral and cellular glycoconjugates. Cleaves off the terminal sialic acids on the glycosylated HA during virus budding to facilitate virus release. Additionally helps virus spread through the circulation by further removing sialic acids from the cell surface. These cleavages prevent self-aggregation and ensure the efficient spread of the progeny virus from cell to cell. Otherwise, infection would be limited to one round of replication. Described as a receptor-destroying enzyme because it cleaves a terminal sialic acid from the cellular receptors. May facilitate viral invasion of the upper airways by cleaving the sialic acid moieties on the mucin of the airway epithelial cells. Likely to plays a role in the budding process through its association with lipid rafts during intracellular transport. May additionally display a raft-association independent effect on budding. Plays a role in the determination of host range restriction on replication and virulence. Sialidase activity in late endosome/lysosome traffic seems to enhance virus replication. The protein is Neuraminidase of Aves (Cat).